A 275-amino-acid chain; its full sequence is MRDLHKKKPRPVTQNRLKKPPKTCKPINYRGILKKTAKVVGGAALISAVGCAGYGIYRIIAGTTFFKLERIEVSELKTLKRQEIIDLAGVREGDGMFGLRLRSIGEQIGKNPWVSRVEVRRYLPNTLSMQIAERQPVAVINMGYLYYLDANGDVFKPLTEGDQLDYPVITGISEEDIARDPAGSKGALKEVLELIAHLKSRADFKLDEVSEIHYDKGYGVTLFTAAAGVPVKLGSGDYSRKLDRLARIYKELQTQISVLEYIDLDYSDKIIVKKV.

The interval 1–20 (MRDLHKKKPRPVTQNRLKKP) is disordered. The Cytoplasmic portion of the chain corresponds to 1–38 (MRDLHKKKPRPVTQNRLKKPPKTCKPINYRGILKKTAK). A helical transmembrane segment spans residues 39-61 (VVGGAALISAVGCAGYGIYRIIA). Over 62–275 (GTTFFKLERI…YSDKIIVKKV (214 aa)) the chain is Periplasmic. Positions 66-134 (FKLERIEVSE…NTLSMQIAER (69 aa)) constitute a POTRA domain.

Belongs to the FtsQ/DivIB family. FtsQ subfamily.

It localises to the cell inner membrane. In terms of biological role, essential cell division protein. The chain is Cell division protein FtsQ from Geotalea daltonii (strain DSM 22248 / JCM 15807 / FRC-32) (Geobacter daltonii).